The sequence spans 626 residues: DNA mismatch repair protein MutL (626 aa).

2 disordered regions span residues 385 to 413 and 418 to 437; these read SGAS…PSMV and LTPS…VAPD.

Belongs to the DNA mismatch repair MutL/HexB family.

In terms of biological role, this protein is involved in the repair of mismatches in DNA. It is required for dam-dependent methyl-directed DNA mismatch repair. May act as a 'molecular matchmaker', a protein that promotes the formation of a stable complex between two or more DNA-binding proteins in an ATP-dependent manner without itself being part of a final effector complex. This chain is DNA mismatch repair protein MutL, found in Chlorobaculum parvum (strain DSM 263 / NCIMB 8327) (Chlorobium vibrioforme subsp. thiosulfatophilum).